A 263-amino-acid chain; its full sequence is Glutamate racemase (263 aa).

Residues 13-14 (DS) and 45-46 (YG) contribute to the substrate site. The active-site Proton donor/acceptor is C77. Residue 78–79 (NT) participates in substrate binding. The Proton donor/acceptor role is filled by C185. 186–187 (TH) is a binding site for substrate.

It belongs to the aspartate/glutamate racemases family.

The enzyme catalyses L-glutamate = D-glutamate. Its pathway is cell wall biogenesis; peptidoglycan biosynthesis. Its function is as follows. Provides the (R)-glutamate required for cell wall biosynthesis. The protein is Glutamate racemase of Vibrio vulnificus (strain YJ016).